The sequence spans 209 residues: Putative 3-methyladenine DNA glycosylase (209 aa).

The interval 189–209 (HVSTTRLGAPKKKRQKRLERR) is disordered. Basic residues predominate over residues 197-209 (APKKKRQKRLERR).

Belongs to the DNA glycosylase MPG family.

In Chlorobaculum parvum (strain DSM 263 / NCIMB 8327) (Chlorobium vibrioforme subsp. thiosulfatophilum), this protein is Putative 3-methyladenine DNA glycosylase.